We begin with the raw amino-acid sequence, 165 residues long: Growth arrest and DNA damage-inducible protein GADD45 alpha (165 aa).

A Phosphothreonine modification is found at threonine 2.

It belongs to the GADD45 family. Interacts with AURKA, PCNA, GADD45GIP1 and MAPK14.

It localises to the nucleus. Its function is as follows. Might affect PCNA interaction with some CDK (cell division protein kinase) complexes; stimulates DNA excision repair in vitro and inhibits entry of cells into S phase. In T-cells, functions as a regulator of p38 MAPKs by inhibiting p88 phosphorylation and activity. This chain is Growth arrest and DNA damage-inducible protein GADD45 alpha (GADD45A), found in Cricetulus griseus (Chinese hamster).